Consider the following 280-residue polypeptide: GTP-binding protein rhoC (280 aa).

The tract at residues 13–59 (TSRRHSLVTPPPSVAPRQNRMRSQSVRVSNGTVSTDNSMSSGRVSEA) is disordered. Positions 33–59 (MRSQSVRVSNGTVSTDNSMSSGRVSEA) are enriched in polar residues. 76–83 (GDGGCGKT) lines the GTP pocket. An Effector region motif is present at residues 98-106 (YVPTVFENY). Residues 125 to 129 (DTAGQ) and 183 to 186 (LKSD) each bind GTP. The segment at 251-275 (WDTRLPSSSGKPGGKPIGGKKIKKR) is disordered. At Cys277 the chain carries Cysteine methyl ester. The S-geranylgeranyl cysteine moiety is linked to residue Cys277. Residues 278 to 280 (KIL) constitute a propeptide, removed in mature form.

The protein belongs to the small GTPase superfamily. Rho family.

It is found in the cell membrane. The sequence is that of GTP-binding protein rhoC (rhoC) from Emericella nidulans (strain FGSC A4 / ATCC 38163 / CBS 112.46 / NRRL 194 / M139) (Aspergillus nidulans).